The chain runs to 114 residues: Ribosome-binding factor A (114 aa).

The protein belongs to the RbfA family. Monomer. Binds 30S ribosomal subunits, but not 50S ribosomal subunits or 70S ribosomes.

The protein resides in the cytoplasm. In terms of biological role, one of several proteins that assist in the late maturation steps of the functional core of the 30S ribosomal subunit. Associates with free 30S ribosomal subunits (but not with 30S subunits that are part of 70S ribosomes or polysomes). Required for efficient processing of 16S rRNA. May interact with the 5'-terminal helix region of 16S rRNA. This Listeria welshimeri serovar 6b (strain ATCC 35897 / DSM 20650 / CCUG 15529 / CIP 8149 / NCTC 11857 / SLCC 5334 / V8) protein is Ribosome-binding factor A.